Consider the following 80-residue polypeptide: Small ribosomal subunit protein bS18 (80 aa).

Belongs to the bacterial ribosomal protein bS18 family. In terms of assembly, part of the 30S ribosomal subunit. Forms a tight heterodimer with protein bS6.

Binds as a heterodimer with protein bS6 to the central domain of the 16S rRNA, where it helps stabilize the platform of the 30S subunit. This is Small ribosomal subunit protein bS18 from Staphylococcus saprophyticus subsp. saprophyticus (strain ATCC 15305 / DSM 20229 / NCIMB 8711 / NCTC 7292 / S-41).